We begin with the raw amino-acid sequence, 405 residues long: Elongation factor Tu (405 aa).

A tr-type G domain is found at 10–213 (KEHVNVGTIG…AMDEYIPTPE (204 aa)). The tract at residues 19 to 26 (GHVDHGKS) is G1. A GTP-binding site is contributed by 19–26 (GHVDHGKS). Position 26 (Ser-26) interacts with Mg(2+). The G2 stretch occupies residues 64–68 (GITIN). A G3 region spans residues 85–88 (DCPG). GTP is bound by residues 85 to 89 (DCPGH) and 140 to 143 (NKCD). Residues 140–143 (NKCD) are G4. A G5 region spans residues 178–180 (SAL).

Belongs to the TRAFAC class translation factor GTPase superfamily. Classic translation factor GTPase family. EF-Tu/EF-1A subfamily. As to quaternary structure, monomer.

The protein localises to the cytoplasm. It catalyses the reaction GTP + H2O = GDP + phosphate + H(+). GTP hydrolase that promotes the GTP-dependent binding of aminoacyl-tRNA to the A-site of ribosomes during protein biosynthesis. This is Elongation factor Tu from Aquifex pyrophilus.